The sequence spans 391 residues: NADH-quinone oxidoreductase subunit D (391 aa).

Belongs to the complex I 49 kDa subunit family. In terms of assembly, NDH-1 is composed of 14 different subunits. Subunits NuoB, C, D, E, F, and G constitute the peripheral sector of the complex.

Its subcellular location is the cell inner membrane. It carries out the reaction a quinone + NADH + 5 H(+)(in) = a quinol + NAD(+) + 4 H(+)(out). NDH-1 shuttles electrons from NADH, via FMN and iron-sulfur (Fe-S) centers, to quinones in the respiratory chain. The immediate electron acceptor for the enzyme in this species is believed to be ubiquinone. Couples the redox reaction to proton translocation (for every two electrons transferred, four hydrogen ions are translocated across the cytoplasmic membrane), and thus conserves the redox energy in a proton gradient. This Rickettsia massiliae (strain Mtu5) protein is NADH-quinone oxidoreductase subunit D.